A 66-amino-acid chain; its full sequence is MAVPKKKTSKSRRNMRRSHLALGKVNVIVDSQTGEYKLPHHVSLIDGTYNNRQVVTKKIETEEEVA.

The protein belongs to the bacterial ribosomal protein bL32 family.

This Rickettsia bellii (strain OSU 85-389) protein is Large ribosomal subunit protein bL32.